Consider the following 454-residue polypeptide: tRNA modification GTPase MnmE (454 aa).

Residues R23, E80, and K120 each contribute to the (6S)-5-formyl-5,6,7,8-tetrahydrofolate site. One can recognise a TrmE-type G domain in the interval 216 to 377 (GMKVVIAGRP…LRNHLKQSMG (162 aa)). N226 is a K(+) binding site. GTP-binding positions include 226–231 (NAGKSS), 245–251 (TDIAGTT), 270–273 (DTAG), 335–338 (NKAD), and 358–360 (SAR). Mg(2+) is bound at residue S230. Residues T245, I247, and T250 each contribute to the K(+) site. Residue T251 coordinates Mg(2+). A (6S)-5-formyl-5,6,7,8-tetrahydrofolate-binding site is contributed by K454.

The protein belongs to the TRAFAC class TrmE-Era-EngA-EngB-Septin-like GTPase superfamily. TrmE GTPase family. In terms of assembly, homodimer. Heterotetramer of two MnmE and two MnmG subunits. It depends on K(+) as a cofactor.

It is found in the cytoplasm. Its function is as follows. Exhibits a very high intrinsic GTPase hydrolysis rate. Involved in the addition of a carboxymethylaminomethyl (cmnm) group at the wobble position (U34) of certain tRNAs, forming tRNA-cmnm(5)s(2)U34. The protein is tRNA modification GTPase MnmE of Escherichia coli (strain SMS-3-5 / SECEC).